A 201-amino-acid chain; its full sequence is Adenylyl-sulfate kinase (201 aa).

35 to 42 (GLSGSGKS) serves as a coordination point for ATP. S109 serves as the catalytic Phosphoserine intermediate.

It belongs to the APS kinase family.

The catalysed reaction is adenosine 5'-phosphosulfate + ATP = 3'-phosphoadenylyl sulfate + ADP + H(+). It participates in sulfur metabolism; hydrogen sulfide biosynthesis; sulfite from sulfate: step 2/3. In terms of biological role, catalyzes the synthesis of activated sulfate. The protein is Adenylyl-sulfate kinase of Citrobacter koseri (strain ATCC BAA-895 / CDC 4225-83 / SGSC4696).